Here is a 208-residue protein sequence, read N- to C-terminus: Guanylate kinase (208 aa).

The region spanning 4 to 185 (GNLYIISAPS…ALVDLEHILR (182 aa)) is the Guanylate kinase-like domain. 11 to 18 (APSGAGKS) serves as a coordination point for ATP.

The protein belongs to the guanylate kinase family.

The protein resides in the cytoplasm. The enzyme catalyses GMP + ATP = GDP + ADP. Essential for recycling GMP and indirectly, cGMP. The sequence is that of Guanylate kinase from Histophilus somni (strain 129Pt) (Haemophilus somnus).